Here is a 1086-residue protein sequence, read N- to C-terminus: Endo-1,4-beta-xylanase C (1086 aa).

The first 31 residues, M1 to A31, serve as a signal peptide directing secretion. CBM-cenC domains are found at residues G35–V183 and G197–T359. The GH10 domain occupies E365–P710. E502 acts as the Proton donor in catalysis. D556 is an active-site residue. E620 (nucleophile) is an active-site residue.

This sequence belongs to the glycosyl hydrolase 10 (cellulase F) family.

It carries out the reaction Endohydrolysis of (1-&gt;4)-beta-D-xylosidic linkages in xylans.. Its pathway is glycan degradation; xylan degradation. Its function is as follows. Endoxylanase with high hydrolytic activity on birchwood and oat spelt xylan. Xylotetraose, xylotriose, xylobiose and xylose are the main products from birchwood xylan hydrolysis. Shows increasing activity on xylo-oligosaccharides of increasing length. Displays very low hydrolytic activity on Avicel, carboxymethylcellulose (CMC) and p-nitrophenyl-beta-xylopyranoside. Also shows transxylosidase activity, allowing the formation of xylo-oligosaccharides of higher degree of polymerization than the starting substrate. This Paenibacillus barcinonensis protein is Endo-1,4-beta-xylanase C (xynC).